The chain runs to 259 residues: Phosphate import ATP-binding protein PstB (259 aa).

An ABC transporter domain is found at 2 to 248; sequence GQRIDVNHEN…ITMFNNPQNE (247 aa). ATP is bound at residue 37–44; the sequence is GPSGCGKS.

Belongs to the ABC transporter superfamily. Phosphate importer (TC 3.A.1.7) family. In terms of assembly, the complex is composed of two ATP-binding proteins (PstB), two transmembrane proteins (PstC and PstA) and a solute-binding protein (PstS).

Its subcellular location is the cell membrane. It carries out the reaction phosphate(out) + ATP + H2O = ADP + 2 phosphate(in) + H(+). In terms of biological role, part of the ABC transporter complex PstSACB involved in phosphate import. Responsible for energy coupling to the transport system. This Bifidobacterium longum (strain NCC 2705) protein is Phosphate import ATP-binding protein PstB.